The sequence spans 502 residues: Peroxisomal catalase (502 aa).

Active-site residues include His-64 and Asn-137. Residue Tyr-347 coordinates heme. The Microbody targeting signal signature appears at 500–502 (AKM).

Belongs to the catalase family. It depends on heme as a cofactor.

It localises to the peroxisome matrix. It carries out the reaction 2 H2O2 = O2 + 2 H2O. Its function is as follows. Catalyzes the degradation of hydrogen peroxide (H(2)O(2)) generated by peroxisomal oxidases to water and oxygen, thereby protecting cells from the toxic effects of hydrogen peroxide. This chain is Peroxisomal catalase, found in Toxoplasma gondii.